The following is a 241-amino-acid chain: Methylthioribulose-1-phosphate dehydratase (241 aa).

Over residues 1–12 the composition is skewed to basic and acidic residues; sequence MSQEITQKDNND. Residues 1–22 are disordered; it reads MSQEITQKDNNDHLVQSSDPDH. C101 is a binding site for substrate. 2 residues coordinate Zn(2+): H118 and H120. Residue E147 is the Proton donor/acceptor of the active site. H203 serves as a coordination point for Zn(2+).

Belongs to the aldolase class II family. MtnB subfamily. Zn(2+) is required as a cofactor.

The protein resides in the cytoplasm. It catalyses the reaction 5-(methylsulfanyl)-D-ribulose 1-phosphate = 5-methylsulfanyl-2,3-dioxopentyl phosphate + H2O. The protein operates within amino-acid biosynthesis; L-methionine biosynthesis via salvage pathway; L-methionine from S-methyl-5-thio-alpha-D-ribose 1-phosphate: step 2/6. Its function is as follows. Catalyzes the dehydration of methylthioribulose-1-phosphate (MTRu-1-P) into 2,3-diketo-5-methylthiopentyl-1-phosphate (DK-MTP-1-P). This Aspergillus terreus (strain NIH 2624 / FGSC A1156) protein is Methylthioribulose-1-phosphate dehydratase.